Here is a 545-residue protein sequence, read N- to C-terminus: Ubiquitin carboxyl-terminal hydrolase 17-like protein C (545 aa).

One can recognise a USP domain in the interval 51-348; the sequence is CGLQNTGNSC…NAYVLFYVQQ (298 aa). C60 serves as the catalytic Nucleophile. H307 (proton acceptor) is an active-site residue. Disordered stretches follow at residues 368 to 442 and 489 to 539; these read DPEY…QKLG and WGRD…KQGQ. Residues 374-385 are compositionally biased toward basic residues; it reads KKSRRKKHKKKS. 2 stretches are compositionally biased toward basic and acidic residues: residues 393 to 404 and 489 to 505; these read EPCKNREKRATK and WGRDAPDKENQPWHNAD. Polar residues predominate over residues 508-519; sequence LTSQDPVNTGQL. The span at 524 to 537 shows a compositional bias: basic residues; that stretch reads GRRRSKKGKNKNKQ.

This sequence belongs to the peptidase C19 family. USP17 subfamily. In terms of tissue distribution, expressed in T cells.

The protein resides in the nucleus. Its subcellular location is the endoplasmic reticulum. It catalyses the reaction Thiol-dependent hydrolysis of ester, thioester, amide, peptide and isopeptide bonds formed by the C-terminal Gly of ubiquitin (a 76-residue protein attached to proteins as an intracellular targeting signal).. Deubiquitinating enzyme that removes conjugated ubiquitin from specific proteins to regulate different cellular processes. Important for preimplantation stage embryonic development. This Mus musculus (Mouse) protein is Ubiquitin carboxyl-terminal hydrolase 17-like protein C.